We begin with the raw amino-acid sequence, 316 residues long: Geminin coiled-coil domain-containing protein 1 (316 aa).

Residues 82–117 adopt a coiled-coil conformation; sequence QISANKQLQDTLLQKEEELSRLHEENNKLKEFLNSA. Polar residues-rich tracts occupy residues 134–155 and 207–234; these read GQSS…STPG and MSLQ…QAAT. Disordered stretches follow at residues 134-160 and 207-269; these read GQSS…KAKR and MSLQ…DVAP. Thr153 carries the phosphothreonine; by cdk2 modification. The span at 235 to 252 shows a compositional bias: low complexity; that stretch reads SCSLSPSQCSSASLPESE. Positions 253 to 262 are enriched in polar residues; the sequence is TASPLSSPTY.

The protein belongs to the GEMC1 family. Interacts with topbp1. Interacts with Cdc45l and the kinase cdk2-cyclin-E (the interaction is direct). Post-translationally, highly phosphorylated by cdk2; stimulates initiation of DNA replication. Expressed in most tissues. Enriched in proliferating cells from skin and gut.

It is found in the nucleus. In terms of biological role, regulator of DNA replication. Promotes initiation of chromosomal DNA replication by mediating topbp1- and cdk2-dependent recruitment of cdc45l onto replication origins. The protein is Geminin coiled-coil domain-containing protein 1 (gmnc) of Xenopus laevis (African clawed frog).